The sequence spans 283 residues: ATP phosphoribosyltransferase (283 aa).

Belongs to the ATP phosphoribosyltransferase family. Long subfamily. Requires Mg(2+) as cofactor.

The protein localises to the cytoplasm. It catalyses the reaction 1-(5-phospho-beta-D-ribosyl)-ATP + diphosphate = 5-phospho-alpha-D-ribose 1-diphosphate + ATP. It functions in the pathway amino-acid biosynthesis; L-histidine biosynthesis; L-histidine from 5-phospho-alpha-D-ribose 1-diphosphate: step 1/9. Its activity is regulated as follows. Feedback inhibited by histidine. Functionally, catalyzes the condensation of ATP and 5-phosphoribose 1-diphosphate to form N'-(5'-phosphoribosyl)-ATP (PR-ATP). Has a crucial role in the pathway because the rate of histidine biosynthesis seems to be controlled primarily by regulation of HisG enzymatic activity. The polypeptide is ATP phosphoribosyltransferase (Rhodococcus opacus (strain B4)).